The primary structure comprises 119 residues: Large ribosomal subunit protein uL18 (119 aa).

This sequence belongs to the universal ribosomal protein uL18 family. Part of the 50S ribosomal subunit; part of the 5S rRNA/L5/L18/L25 subcomplex. Contacts the 5S and 23S rRNAs.

This is one of the proteins that bind and probably mediate the attachment of the 5S RNA into the large ribosomal subunit, where it forms part of the central protuberance. In Malacoplasma penetrans (strain HF-2) (Mycoplasma penetrans), this protein is Large ribosomal subunit protein uL18.